A 793-amino-acid polypeptide reads, in one-letter code: E3 UFM1-protein ligase 1 (793 aa).

Position 2 is an N-acetylalanine (alanine 2). Residues 2–200 are mediates interaction with DDRGK1; it reads ADAWEEIRRL…RGLFSAITRP (199 aa). The interval 2–212 is required for E3 UFM1-protein ligase activity; that stretch reads ADAWEEIRRL…VNSLVSKYGF (211 aa). Residues 121–250 form an involved in CDK5RAP3-binding region; it reads DQLSEEVNDK…KAVFVPDIYS (130 aa). The interval 200 to 400 is mediates interaction with TRIP4; that stretch reads PTPVNSLVSK…NPVHLITEED (201 aa). The disordered stretch occupies residues 410–473; sequence VNTSKKDKKD…SSHGGKKKPD (64 aa). Arginine 433 is subject to Omega-N-methylarginine. Phosphoserine occurs at positions 458 and 462. Residues 490–683 form a mediates interaction with CDK5RAP3 region; that stretch reads IQDAPEEFIS…QLKVTEDPAL (194 aa). Threonine 535 is modified (phosphothreonine). Residues 742–765 form a disordered region; that stretch reads NKKTGQGEDPSSDELDKEQHDVTN. 2 positions are modified to phosphoserine: serine 752 and serine 753.

This sequence belongs to the UFL1 family. As to quaternary structure, catalytic component of the UFM1 ribosome E3 ligase (UREL) complex, composed of UFL1, DDRGK1 and CDK5RAP3. Interacts with E2-like enzyme UFC1. Interacts with RELA. Interacts with NBN; promoting recruitment to double-strand breaks following DNA damage. Interacts (when phosphorylated) with YWHAG/14-3-3-gamma; sequestering UFL1 and preventing its association with PDCD1/PD-1 substrate. Post-translationally, ubiquitinated, leading to its degradation by the proteasome. Interaction with CDK5RAP3 protects both proteins against ubiquitination and degradation via the proteasome. In terms of processing, phosphorylated at Ser-462 by ATM, enhancing protein ligase activity and promoting ATM activation in a positive feedback loop. Phosphorylation at Thr-535 by AMPK promotes its interaction with YWHAG/14-3-3-gamma, thereby preventing UFL1 association with PDCD1/PD-1 substrate. Ubiquitously expressed with higher expression in pancreatic islets and other secretory tissues. In the embryonic brain at 17 dpc, detected in Sox2-positive neural stem cells and in Slc1a3/GLAST-positive radial glia. In perinatal brain, highly expressed in Slc1a3-positive Bergmann glia of the cerebellum. Continues to be expressed in Bergmann glia of adult brain at 16 weeks. Expressed in adult heart. Highly expressed in the intestinal exocrine cells.

It is found in the endoplasmic reticulum membrane. The protein localises to the cytoplasm. It localises to the cytosol. Its subcellular location is the nucleus. The protein resides in the chromosome. In terms of biological role, E3 protein ligase that mediates ufmylation, the covalent attachment of the ubiquitin-like modifier UFM1 to lysine residues on target proteins, and which plays a key role in various processes, such as ribosome recycling, response to DNA damage, interferon response or reticulophagy (also called ER-phagy). Catalyzes ufmylation of many protein, such as CD274/PD-L1, CDK5RAP3, CYB5R3, DDRGK1, EIF6, histone H4, MRE11, P4HB, PDCD1/PD-1, TRIP4, RPN1, RPS20/uS10, RPL10/uL16, RPL26/uL24, SYVN1/HRD1 and TP53/p53. As part of the UREL complex, plays a key role in ribosome recycling by catalyzing mono-ufmylation of RPL26/uL24 subunit of the 60S ribosome. Ufmylation of RPL26/uL24 occurs on free 60S ribosomes following ribosome dissociation: it weakens the junction between post-termination 60S subunits and SEC61 translocons, promoting release and recycling of the large ribosomal subunit from the endoplasmic reticulum membrane. Ufmylation of RPL26/uL24 and subsequent 60S ribosome recycling either take place after normal termination of translation or after ribosome stalling during cotranslational translocation at the endoplasmic reticulum. Involved in reticulophagy in response to endoplasmic reticulum stress by mediating ufmylation of proteins such as CYB5R3 and RPN1, thereby promoting lysosomal degradation of ufmylated proteins. Ufmylation in response to endoplasmic reticulum stress is essential for processes such as hematopoiesis, blood vessel morphogenesis or inflammatory response. Mediates ufmylation of DDRGK1 and CDK5RAP3; the role of these modifications is however unclear: as both DDRGK1 and CDK5RAP3 act as substrate adapters for ufmylation, it is uncertain whether ufmylation of these proteins is a collateral effect or is required for ufmylation. Acts as a negative regulator of T-cell activation by mediating ufmylation and stabilization of PDCD1/PD-1. Also involved in the response to DNA damage: recruited to double-strand break sites following DNA damage and mediates monoufmylation of histone H4 and ufmylation of MRE11. Mediates ufmylation of TP53/p53, promoting its stability. Catalyzes ufmylation of TRIP4, thereby playing a role in nuclear receptor-mediated transcription. Required for hematopoietic stem cell function and hematopoiesis. This chain is E3 UFM1-protein ligase 1, found in Mus musculus (Mouse).